Reading from the N-terminus, the 299-residue chain is Very long chain fatty acid elongase 5 (299 aa).

Met-1 is modified (N-acetylmethionine). The next 7 helical transmembrane spans lie at 26–46, 64–84, 112–132, 139–158, 168–187, 205–225, and 226–246; these read WFLLDNYIPTFICSVIYLLIV, ILVVYNLGLTLLSLYMFCELV, VLWWYYFSKLIEFMDTFFFIL, ITVLHVYHHASMLNIWWFVM, FGATLNSFIHVLMYSYYGLS, GQLLQFVLTIIQTSCGVIWPC, and TFPLGWLYFQIGYMISLIALF. The segment at 274 to 299 is disordered; sequence MAAVNGHTNSFSPLENNVKPRKLRKD. The segment covering 279–288 has biased composition (polar residues); that stretch reads GHTNSFSPLE. The residue at position 285 (Ser-285) is a Phosphoserine.

Belongs to the ELO family. ELOVL5 subfamily. In terms of assembly, interacts with TECR. Ubiquitous. Highly expressed in the adrenal gland and testis. Weakly expressed in prostate, lung and brain. Expressed in the cerebellum.

Its subcellular location is the endoplasmic reticulum membrane. The protein localises to the cell projection. It localises to the dendrite. The enzyme catalyses a very-long-chain acyl-CoA + malonyl-CoA + H(+) = a very-long-chain 3-oxoacyl-CoA + CO2 + CoA. It carries out the reaction (6Z,9Z,12Z)-octadecatrienoyl-CoA + malonyl-CoA + H(+) = (8Z,11Z,14Z)-3-oxoeicosatrienoyl-CoA + CO2 + CoA. It catalyses the reaction (9Z,12Z,15Z)-octadecatrienoyl-CoA + malonyl-CoA + H(+) = (11Z,14Z,17Z)-3-oxoeicosatrienoyl-CoA + CO2 + CoA. The catalysed reaction is (9Z)-hexadecenoyl-CoA + malonyl-CoA + H(+) = 3-oxo-(11Z)-octadecenoyl-CoA + CO2 + CoA. The enzyme catalyses (9Z)-octadecenoyl-CoA + malonyl-CoA + H(+) = 3-oxo-(11Z)-eicosenoyl-CoA + CO2 + CoA. It carries out the reaction (11Z)-octadecenoyl-CoA + malonyl-CoA + H(+) = 3-oxo-(13Z)-eicosenoyl-CoA + CO2 + CoA. It catalyses the reaction (9Z,12Z)-octadecadienoyl-CoA + malonyl-CoA + H(+) = (11Z,14Z)-3-oxoicosa-11,14-dienoyl-CoA + CO2 + CoA. The catalysed reaction is (6Z,9Z,12Z,15Z)-octadecatetraenoyl-CoA + malonyl-CoA + H(+) = (8Z,11Z,14Z,17Z)-3-oxoicosatetraenoyl-CoA + CO2 + CoA. The enzyme catalyses (5Z,8Z,11Z,14Z)-eicosatetraenoyl-CoA + malonyl-CoA + H(+) = (7Z,10Z,13Z,16Z)-3-oxodocosatetraenoyl-CoA + CO2 + CoA. It carries out the reaction (5Z,8Z,11Z,14Z,17Z)-eicosapentaenoyl-CoA + malonyl-CoA + H(+) = 3-oxo-(7Z,10Z,13Z,16Z,19Z)-docosapentaenoyl-CoA + CO2 + CoA. Its pathway is lipid metabolism; polyunsaturated fatty acid biosynthesis. Catalyzes the first and rate-limiting reaction of the four reactions that constitute the long-chain fatty acids elongation cycle. This endoplasmic reticulum-bound enzymatic process allows the addition of 2 carbons to the chain of long- and very long-chain fatty acids (VLCFAs) per cycle. Condensing enzyme that acts specifically toward polyunsaturated acyl-CoA with the higher activity toward C18:3(n-6) acyl-CoA. May participate in the production of monounsaturated and of polyunsaturated VLCFAs of different chain lengths that are involved in multiple biological processes as precursors of membrane lipids and lipid mediators. In conditions where the essential linoleic and alpha linoleic fatty acids are lacking it is also involved in the synthesis of Mead acid from oleic acid. The sequence is that of Very long chain fatty acid elongase 5 from Homo sapiens (Human).